Consider the following 280-residue polypeptide: Urease accessory protein UreD 3 (280 aa).

This sequence belongs to the UreD family. As to quaternary structure, ureD, UreF and UreG form a complex that acts as a GTP-hydrolysis-dependent molecular chaperone, activating the urease apoprotein by helping to assemble the nickel containing metallocenter of UreC. The UreE protein probably delivers the nickel.

Its subcellular location is the cytoplasm. Required for maturation of urease via the functional incorporation of the urease nickel metallocenter. The sequence is that of Urease accessory protein UreD 3 from Bradyrhizobium sp. (strain ORS 278).